Consider the following 683-residue polypeptide: Transforming growth factor-beta-induced protein ig-h3 (683 aa).

A signal peptide spans 1-23 (MALLGRLLPLALALALGPAATHA). The residue at position 37 (S37) is a Phosphoserine. One can recognise an EMI domain in the interval 45–99 (GPNVCAVQKLIGTNKKYFTNCKQWYQRKICGKSTVISYECCPGYEKVPGEKGCPA). 5 disulfide bridges follow: C49-C85, C74-C339, C84-C97, C214-C317, and C473-C478. S-cysteinyl cysteine is present on C65. FAS1 domains lie at 103-236 (LSNL…DKVI), 240-371 (TNNI…DELL), 375-498 (SAKT…DRML), and 502-632 (MGTV…NTVL). Residues 642 to 644 (RGD) carry the Cell attachment site motif.

Binds to type I, II, and IV collagens. Post-translationally, gamma-carboxyglutamated; gamma-carboxyglutamate residues are formed by vitamin K dependent carboxylation; these residues may be required for binding to calcium. According to a report, does not contain any vitamin K-dependent gamma-carboxyglutamate residues. In terms of processing, the EMI domain contains 2 expected intradomain disulfide bridges (Cys-49-Cys85 and Cys-84-Cys-97) and one unusual interdomain disulfide bridge to the second FAS1 domain (Cys-74-Cys-339). This arrangement violates the predicted disulfide bridge pattern of an EMI domain. In terms of tissue distribution, widely distributed in various tissues except for the brain. High levels in corneal epithelium.

It localises to the secreted. Its subcellular location is the extracellular space. The protein localises to the extracellular matrix. Its function is as follows. Plays a role in cell adhesion. May play a role in cell-collagen interactions. This chain is Transforming growth factor-beta-induced protein ig-h3 (TGFBI), found in Sus scrofa (Pig).